A 266-amino-acid chain; its full sequence is Trypsin 5G1 (266 aa).

Residues 1–18 (MTRIILILTATFFACALG) form the signal peptide. A propeptide spans 19–39 (ASTGGSHPLRPWWNALRSSGR) (activation peptide). The Peptidase S1 domain maps to 40-265 (IVGGFEVPVE…VRDWVKEVSG (226 aa)). A disulfide bridge links Cys-66 with Cys-82. Catalysis depends on charge relay system residues His-81 and Asp-125. 2 cysteine pairs are disulfide-bonded: Cys-190–Cys-206 and Cys-217–Cys-241. The active-site Charge relay system is Ser-221.

Belongs to the peptidase S1 family. As to expression, midgut.

Its subcellular location is the secreted. It is found in the extracellular space. The catalysed reaction is Preferential cleavage: Arg-|-Xaa, Lys-|-Xaa.. Functionally, major function may be to aid in digestion of the blood meal. The sequence is that of Trypsin 5G1 from Aedes aegypti (Yellowfever mosquito).